The sequence spans 573 residues: 2-succinyl-5-enolpyruvyl-6-hydroxy-3-cyclohexene-1-carboxylate synthase (573 aa).

This sequence belongs to the TPP enzyme family. MenD subfamily. Homodimer. It depends on Mg(2+) as a cofactor. Requires Mn(2+) as cofactor. Thiamine diphosphate serves as cofactor.

It catalyses the reaction isochorismate + 2-oxoglutarate + H(+) = 5-enolpyruvoyl-6-hydroxy-2-succinyl-cyclohex-3-ene-1-carboxylate + CO2. It functions in the pathway quinol/quinone metabolism; 1,4-dihydroxy-2-naphthoate biosynthesis; 1,4-dihydroxy-2-naphthoate from chorismate: step 2/7. It participates in quinol/quinone metabolism; menaquinone biosynthesis. In terms of biological role, catalyzes the thiamine diphosphate-dependent decarboxylation of 2-oxoglutarate and the subsequent addition of the resulting succinic semialdehyde-thiamine pyrophosphate anion to isochorismate to yield 2-succinyl-5-enolpyruvyl-6-hydroxy-3-cyclohexene-1-carboxylate (SEPHCHC). The chain is 2-succinyl-5-enolpyruvyl-6-hydroxy-3-cyclohexene-1-carboxylate synthase from Shewanella sp. (strain ANA-3).